Reading from the N-terminus, the 96-residue chain is Large ribosomal subunit protein uL23 (96 aa).

It belongs to the universal ribosomal protein uL23 family. Part of the 50S ribosomal subunit. Contacts protein L29, and trigger factor when it is bound to the ribosome.

Functionally, one of the early assembly proteins it binds 23S rRNA. One of the proteins that surrounds the polypeptide exit tunnel on the outside of the ribosome. Forms the main docking site for trigger factor binding to the ribosome. The polypeptide is Large ribosomal subunit protein uL23 (Desulfovibrio desulfuricans (strain ATCC 27774 / DSM 6949 / MB)).